Reading from the N-terminus, the 406-residue chain is Probable tRNA sulfurtransferase (406 aa).

The 106-residue stretch at 62-167 (AEVSNRLTKV…QDATYLSFED (106 aa)) folds into the THUMP domain. Residues 185–186 (ML), 210–211 (HF), R267, G289, and Q298 each bind ATP.

It belongs to the ThiI family.

It is found in the cytoplasm. It catalyses the reaction [ThiI sulfur-carrier protein]-S-sulfanyl-L-cysteine + a uridine in tRNA + 2 reduced [2Fe-2S]-[ferredoxin] + ATP + H(+) = [ThiI sulfur-carrier protein]-L-cysteine + a 4-thiouridine in tRNA + 2 oxidized [2Fe-2S]-[ferredoxin] + AMP + diphosphate. The catalysed reaction is [ThiS sulfur-carrier protein]-C-terminal Gly-Gly-AMP + S-sulfanyl-L-cysteinyl-[cysteine desulfurase] + AH2 = [ThiS sulfur-carrier protein]-C-terminal-Gly-aminoethanethioate + L-cysteinyl-[cysteine desulfurase] + A + AMP + 2 H(+). It functions in the pathway cofactor biosynthesis; thiamine diphosphate biosynthesis. In terms of biological role, catalyzes the ATP-dependent transfer of a sulfur to tRNA to produce 4-thiouridine in position 8 of tRNAs, which functions as a near-UV photosensor. Also catalyzes the transfer of sulfur to the sulfur carrier protein ThiS, forming ThiS-thiocarboxylate. This is a step in the synthesis of thiazole, in the thiamine biosynthesis pathway. The sulfur is donated as persulfide by IscS. This chain is Probable tRNA sulfurtransferase, found in Lactococcus lactis subsp. cremoris (strain MG1363).